A 138-amino-acid polypeptide reads, in one-letter code: Ribosome-binding factor A (138 aa).

The interval E112–E138 is disordered. Low complexity predominate over residues E119–A131.

The protein belongs to the RbfA family. In terms of assembly, monomer. Binds 30S ribosomal subunits, but not 50S ribosomal subunits or 70S ribosomes.

The protein resides in the cytoplasm. Functionally, one of several proteins that assist in the late maturation steps of the functional core of the 30S ribosomal subunit. Associates with free 30S ribosomal subunits (but not with 30S subunits that are part of 70S ribosomes or polysomes). Required for efficient processing of 16S rRNA. May interact with the 5'-terminal helix region of 16S rRNA. The protein is Ribosome-binding factor A of Anaeromyxobacter dehalogenans (strain 2CP-C).